We begin with the raw amino-acid sequence, 423 residues long: Hypoxia responsive morphology factor B (423 aa).

Residues 46 to 69 (KRSKTRRPKKEYKLQYENTKAHRV) carry the Bipartite nuclear localization signal motif. The segment at 157 to 187 (TQNCWAYRAAYLNAVHTIFSEQICSAMEVSP) is RNA recognition motif (RRM)-like domain. A compositionally biased stretch (polar residues) spans 243–257 (LSPQSGRGPEPSTQI). A disordered region spans residues 243-273 (LSPQSGRGPEPSTQIAEPGRHDSQSEQSTIS).

Belongs to the hrmA family.

Its subcellular location is the nucleus. Probably modulates the generation of the hypoxia-typic morphotype (called H-MORPH) with altered biofilm architecture that leads to increased host inflammation, rapid disease progression, and mortality in a murine model of invasive aspergillosis. This is Hypoxia responsive morphology factor B from Aspergillus fumigatus (strain CBS 144.89 / FGSC A1163 / CEA10) (Neosartorya fumigata).